Consider the following 238-residue polypeptide: Large ribosomal subunit protein uL3 (238 aa).

The protein belongs to the universal ribosomal protein uL3 family. As to quaternary structure, part of the 50S ribosomal subunit. Forms a cluster with proteins L14 and L19.

Functionally, one of the primary rRNA binding proteins, it binds directly near the 3'-end of the 23S rRNA, where it nucleates assembly of the 50S subunit. The sequence is that of Large ribosomal subunit protein uL3 from Mesoplasma florum (strain ATCC 33453 / NBRC 100688 / NCTC 11704 / L1) (Acholeplasma florum).